The sequence spans 319 residues: N-acyl-aromatic-L-amino acid amidohydrolase (carboxylate-forming) (319 aa).

Residues 1 to 210 form a hydrolytic domain region; it reads MCSLPGSRKP…SILDFIELFN (210 aa). Positions 21 and 24 each coordinate Zn(2+). Residues R63 and 70–71 each bind substrate; that span reads NR. H116 serves as a coordination point for Zn(2+). Substrate-binding residues include E178 and Y288. The interval 211-318 is shielding domain; the sequence is QGMEFPAFEM…PGLTPSSTQT (108 aa). The residue at position 318 (T318) is a Phosphothreonine.

This sequence belongs to the AspA/AstE family. Aspartoacylase subfamily. In terms of assembly, exists as a mixture of homodimers and homotetramer, both catalytically active. The cofactor is Zn(2+).

Its subcellular location is the apical cell membrane. The protein localises to the cytoplasm. The catalysed reaction is an N-acyl-aromatic L-alpha-amino acid + H2O = an aromatic L-alpha-amino acid + a carboxylate. It catalyses the reaction an N-acetyl-L-cysteine-S-conjugate + H2O = an S-substituted L-cysteine + acetate. Functionally, plays an important role in deacetylating mercapturic acids in kidney proximal tubules. Also acts on N-acetyl-aromatic amino acids. The protein is N-acyl-aromatic-L-amino acid amidohydrolase (carboxylate-forming) (Acy3) of Rattus norvegicus (Rat).